Reading from the N-terminus, the 134-residue chain is MDRDFGIFSFLAVSVSAAGFFFGGFQYSFLILLSLMAIEFISTTLKETIIHKLSFKKVFARLVKKLVTLALISVCHFFDQLLNTQGSIRDLAIMFYILYESVQIVVTASSLGIPVPQMLVDLLETLKNKFKRKP.

Transmembrane regions (helical) follow at residues 5 to 25, 30 to 50, and 62 to 82; these read FGIF…FGGF, LILL…ETII, and LVKK…DQLL.

Belongs to the bacteriophage holin family. Cp-1 holin subfamily.

It localises to the cell membrane. This is an uncharacterized protein from Bacillus subtilis (strain 168).